Here is a 256-residue protein sequence, read N- to C-terminus: 5-oxoprolinase subunit A (256 aa).

This sequence belongs to the LamB/PxpA family. In terms of assembly, forms a complex composed of PxpA, PxpB and PxpC.

The catalysed reaction is 5-oxo-L-proline + ATP + 2 H2O = L-glutamate + ADP + phosphate + H(+). In terms of biological role, catalyzes the cleavage of 5-oxoproline to form L-glutamate coupled to the hydrolysis of ATP to ADP and inorganic phosphate. The sequence is that of 5-oxoprolinase subunit A from Geobacillus kaustophilus (strain HTA426).